The sequence spans 444 residues: S-locus-specific glycoprotein BS29-1 (444 aa).

The N-terminal stretch at 1 to 28 (MRGVIPNYHHSYTLLFFVILVLFPHVFS) is a signal peptide. The Bulb-type lectin domain occupies 31-159 (TLSPNEALTI…KTTALDRFMW (129 aa)). Residues Asn43, Asn125, Asn180, Asn243, and Asn396 are each glycosylated (N-linked (GlcNAc...) asparagine). The region spanning 356-437 (CGEGDGFLRM…GGQDLYLKVA (82 aa)) is the PAN domain. 2 disulfide bridges follow: Cys387–Cys412 and Cys395–Cys397.

Stigma.

Involved in sporophytic self-incompatibility system (the inability of flowering plants to achieve self-fertilization). The chain is S-locus-specific glycoprotein BS29-1 (SLSG) from Brassica oleracea var. alboglabra (Chinese kale).